We begin with the raw amino-acid sequence, 117 residues long: Large ribosomal subunit protein bL20 (117 aa).

The protein belongs to the bacterial ribosomal protein bL20 family.

In terms of biological role, binds directly to 23S ribosomal RNA and is necessary for the in vitro assembly process of the 50S ribosomal subunit. It is not involved in the protein synthesizing functions of that subunit. The polypeptide is Large ribosomal subunit protein bL20 (Rickettsia peacockii (strain Rustic)).